Reading from the N-terminus, the 471-residue chain is 6-phosphofructo-2-kinase/fructose-2,6-bisphosphatase 1 (471 aa).

An N-acetylserine modification is found at Ser-2. The 6-phosphofructo-2-kinase stretch occupies residues 2-250 (SQEMGELTQT…VYYLMNIHVT (249 aa)). Ser-33 carries the phosphoserine; by PKA modification. ATP is bound at residue 49–57 (GLPARGKTY). 2 residues coordinate beta-D-fructose 6-phosphate: Arg-82 and Arg-105. The active site involves Asp-131. Residues Thr-133 and Arg-139 each coordinate beta-D-fructose 6-phosphate. Ser-141 bears the Phosphoserine mark. The active site involves Cys-161. Position 170 to 175 (170 to 175 (NIRQVK)) interacts with ATP. Beta-D-fructose 6-phosphate-binding residues include Lys-175, Arg-196, and Tyr-200. The tract at residues 251–471 (PRSIYLCRHG…EALDTVPAHY (221 aa)) is fructose-2,6-bisphosphatase. Beta-D-fructose 2,6-bisphosphate is bound at residue Arg-258. His-259 serves as the catalytic Tele-phosphohistidine intermediate. Asn-265, Gly-271, and Arg-308 together coordinate beta-D-fructose 2,6-bisphosphate. Catalysis depends on Glu-328, which acts as the Proton donor/acceptor. Beta-D-fructose 2,6-bisphosphate contacts are provided by Tyr-339, Arg-353, Lys-357, Tyr-368, Gln-394, and Arg-398. 350-353 (FALR) lines the ATP pocket. ATP-binding positions include 394 to 398 (QAVMR) and Tyr-430.

This sequence in the C-terminal section; belongs to the phosphoglycerate mutase family. As to quaternary structure, homodimer. Liver.

It carries out the reaction beta-D-fructose 2,6-bisphosphate + H2O = beta-D-fructose 6-phosphate + phosphate. The enzyme catalyses beta-D-fructose 6-phosphate + ATP = beta-D-fructose 2,6-bisphosphate + ADP + H(+). Phosphorylation at Ser-33 inhibits the kinase and activates the bisphosphatase. Its function is as follows. Synthesis and degradation of fructose 2,6-bisphosphate. In Bos taurus (Bovine), this protein is 6-phosphofructo-2-kinase/fructose-2,6-bisphosphatase 1.